A 176-amino-acid chain; its full sequence is MENNEPVVETPEAQNDLPEVERLKGEVEFLKAELEASKNKFLRLYADFENYKKRMVQELEAAQRNGKFDAVRALLGTLDDLERALGFASVKPEDLIPGVRSVLENFTRSLKSLGVEAVPGVGAEFDPRYHEAIGAVEGEEGKVMHVYQQGFKYGDLLVRPARVVVGSGAKPEEAEA.

Belongs to the GrpE family. In terms of assembly, homodimer.

The protein resides in the cytoplasm. In terms of biological role, participates actively in the response to hyperosmotic and heat shock by preventing the aggregation of stress-denatured proteins, in association with DnaK and GrpE. It is the nucleotide exchange factor for DnaK and may function as a thermosensor. Unfolded proteins bind initially to DnaJ; upon interaction with the DnaJ-bound protein, DnaK hydrolyzes its bound ATP, resulting in the formation of a stable complex. GrpE releases ADP from DnaK; ATP binding to DnaK triggers the release of the substrate protein, thus completing the reaction cycle. Several rounds of ATP-dependent interactions between DnaJ, DnaK and GrpE are required for fully efficient folding. The sequence is that of Protein GrpE from Meiothermus ruber.